The primary structure comprises 932 residues: Lon protease homolog 2, peroxisomal (932 aa).

The Lon N-terminal domain occupies L11–N260. A disordered region spans residues R298–D328. A compositionally biased stretch (basic and acidic residues) spans N317–D328. An ATP-binding site is contributed by G486–T493. In terms of domain architecture, Lon proteolytic spans H729 to D916. Residues S822 and K865 contribute to the active site. The short motif at S930 to L932 is the Microbody targeting signal element.

Belongs to the peptidase S16 family.

The protein resides in the peroxisome matrix. It catalyses the reaction Hydrolysis of proteins in presence of ATP.. Functionally, ATP-dependent serine protease that mediates the selective degradation of misfolded and unassembled polypeptides in the peroxisomal matrix. Necessary for type 2 peroxisome targeting signal (PTS2)-containing protein processing and facilitates peroxisome matrix protein import. The chain is Lon protease homolog 2, peroxisomal from Emericella nidulans (strain FGSC A4 / ATCC 38163 / CBS 112.46 / NRRL 194 / M139) (Aspergillus nidulans).